Reading from the N-terminus, the 582-residue chain is Hydrazine dehydrogenase (582 aa).

A signal peptide spans 1 to 32; sequence MRKFLKVTLASALIGCGVIGTVSSLMVKEAKA. Cysteine 121, cysteine 124, histidine 125, histidine 141, cysteine 151, cysteine 154, histidine 155, histidine 159, cysteine 170, cysteine 175, histidine 176, histidine 191, cysteine 216, cysteine 219, histidine 220, cysteine 227, cysteine 230, histidine 231, histidine 234, cysteine 247, cysteine 250, histidine 251, histidine 267, cysteine 297, cysteine 300, histidine 301, histidine 306, cysteine 342, cysteine 345, histidine 346, histidine 454, and tyrosine 462 together coordinate heme c. A disordered region spans residues 561–582; the sequence is GSHSAHHHESGHDPAARSMKEH. The segment covering 567–582 has biased composition (basic and acidic residues); it reads HHESGHDPAARSMKEH.

As to quaternary structure, homotrimer; subunits are linked by two covalent bonds between Tyr-462 of one subunit and heme P460 of an adjacent subunit. May form 24-mer of an octamer of trimers. Heme c is required as a cofactor.

It localises to the anammoxosome. It carries out the reaction hydrazine + 4 Fe(III)-[cytochrome c] = N2 + 4 Fe(II)-[cytochrome c] + 4 H(+). Its pathway is nitrogen metabolism. With respect to regulation, is strongly and competitively inhibited by NO and hydroxylamine. Catalyzes the four-electron oxidation of hydrazine to N2. The electrons derived from hydrazine oxidation may be transferred to the quinone pool and exploited to promote the generation of proton-motive force (pmf) across the anammoxosome membrane. Is involved in anaerobic ammonium oxidation (anammox), a biological process in which nitrite is used as the electron acceptor in the conversion of ammonium to dinitrogen gas (N2) and water; this bacterial process has a major role in the Earth's nitrogen cycle and has been estimated to synthesize up to 50% of the dinitrogen gas emitted into our atmosphere from the oceans. Cannot oxidize hydroxylamine to NO. This chain is Hydrazine dehydrogenase, found in Kuenenia stuttgartiensis.